The primary structure comprises 346 residues: MEFSAKQIAAFIQGEIIGDENATVHTFAKIEEGIPGAISFLSNPKYTPYIYETKASIVLVNKDFTPEQEVKATLIKVDNAYESLAKLLNLYEMSKPKRTGIDERAYVAETAKIGKDVYIAPFACIGDHAEIGDNTVIHPHATVGGGAKIGSNCILYANSTVYHDCRVGNNCILHAGCVIGADGFGFAPTPQGYEKIPQIGIVILEDNVEVGANTCIDRATMGATVIHSGVKLDNLVQIAHNDEIGSHTVMAAQVGIAGSTKVGEWCMFGGQVGIAGHLKIGNQVNLGAQSGVPGNIKSGSQLIGTPPMELKQFFKASIVQKSLPEMQIELRNLRKEIEELKQQLNK.

Histidine 240 functions as the Proton acceptor in the catalytic mechanism.

The protein belongs to the transferase hexapeptide repeat family. LpxD subfamily. In terms of assembly, homotrimer.

The enzyme catalyses a UDP-3-O-[(3R)-3-hydroxyacyl]-alpha-D-glucosamine + a (3R)-hydroxyacyl-[ACP] = a UDP-2-N,3-O-bis[(3R)-3-hydroxyacyl]-alpha-D-glucosamine + holo-[ACP] + H(+). Its pathway is bacterial outer membrane biogenesis; LPS lipid A biosynthesis. Catalyzes the N-acylation of UDP-3-O-acylglucosamine using 3-hydroxyacyl-ACP as the acyl donor. Is involved in the biosynthesis of lipid A, a phosphorylated glycolipid that anchors the lipopolysaccharide to the outer membrane of the cell. This is UDP-3-O-acylglucosamine N-acyltransferase from Bacteroides fragilis (strain YCH46).